We begin with the raw amino-acid sequence, 271 residues long: Protein PXR1 (271 aa).

2 disordered regions span residues 1–26 (MGLA…NNTS) and 149–233 (KKRP…DSAA). Over residues 17–26 (RNTTWSNNTS) the composition is skewed to polar residues. One can recognise a G-patch domain in the interval 25 to 71 (TSRFGHKHLEKLGWKPGSGLGLVPDSTTSHIKVSIKDDNLGLGAKLK). Residues 165 to 205 (KKTKKVKKEKKVKKVKKEKKEKKEKKDKKEKKVKKEKKEKK) show a composition bias toward basic residues. The segment covering 206-230 (EKKLKDKHSKDTNEITRDQMLKPRD) has biased composition (basic and acidic residues).

Belongs to the PINX1 family.

It localises to the nucleus. Its subcellular location is the nucleolus. Involved in rRNA-processing at A0, A1 and A2 sites and negatively regulates telomerase. The sequence is that of Protein PXR1 (PXR1) from Kluyveromyces lactis (strain ATCC 8585 / CBS 2359 / DSM 70799 / NBRC 1267 / NRRL Y-1140 / WM37) (Yeast).